Here is a 672-residue protein sequence, read N- to C-terminus: MPVARPEASDARVIAHVDMDCFYVQVEQRKQPELRGLPSAVVQYNEWQGGGLIAVSYEARKCGVKRSMRGDEAKAACPQIQLVQVPVARGKADLNLYRSAGSEVVSILAKSGKCERASIDEVYLDLTDAAESMLADAPPESLELIDEEVLKSHILGMNREDGDDFKESVRNWICREDADRRDKLLSCGIIIVAELRKQVLKETEFTCSAGIAHNKMLAKLASGMNKPAQQTVVPYAAVQELLSSLPIKKMKQLGGKLGTSLQTDLGVDTVGDLLQFSETKLQEHYGVNTGTWLWNIARGISGEEVQGRLLPKSHGSGKTFPGPRALKSLSTVQHWLNQLSEELSERLGSDLEQNKRIASTLTLHASAFRSKDSDSHKKFPSKSCPMRYGVTKIQEDAFNLFQAALREYMGSFGIKPQGNKLETWRITGLSVSASKIVDIPSGTSSIMRYFQSQPTVPSRSADGCVQGNVAMTASASEGCSEQRSTETQAAMPEVDTGVTYTLPNFENQDKDIDLVSEKDVVSCPSNEATDVSTQSESNKGTQTKKIGRKMNNSKEKNRGMPSIVDIFKNYNATPPSKQETQEDSTVSSASKRAKLSSSSHNSQVNQEVEESRETDWGYKTDEIDQSVFDELPVEIQRELRSFLRTNKQFNTGKSKGDGSTSSIAHYFPPLNR.

The region spanning 14–254 (IAHVDMDCFY…LPIKKMKQLG (241 aa)) is the UmuC domain. 2 residues coordinate Mg(2+): D18 and M19. Residues D18 and M19 each coordinate Mn(2+). Positions 23 and 60 each coordinate a 2'-deoxyribonucleoside 5'-triphosphate. D120 and E121 together coordinate Mg(2+). Mn(2+) contacts are provided by D120 and E121. Catalysis depends on E121, which acts as the Proton acceptor. 2 DNA-binding regions span residues 318-325 (KTFPGPRA) and 362-383 (TLHASAFRSKDSDSHKKFPSKS). 2 disordered regions span residues 521–617 (VSCP…TDWG) and 648–672 (QFNTGKSKGDGSTSSIAHYFPPLNR). Polar residues-rich tracts occupy residues 523-544 (CPSNEATDVSTQSESNKGTQTK) and 570-586 (YNATPPSKQETQEDSTV). Composition is skewed to low complexity over residues 587-602 (SSASKRAKLSSSSHNS) and 651-662 (TGKSKGDGSTSS).

This sequence belongs to the DNA polymerase type-Y family. Interacts with PCNA1 and PCNA2. The interaction with PCNA2 is required for translesion synthesis (TLS) to repair UV photoproducts. Mg(2+) serves as cofactor. Mn(2+) is required as a cofactor. Constitutively expressed in roots, stems, leaves, flowers and siliques.

The protein localises to the nucleus. The catalysed reaction is DNA(n) + a 2'-deoxyribonucleoside 5'-triphosphate = DNA(n+1) + diphosphate. The enzyme in complex with the DNA substrate binds a third divalent metal cation. The binding of this third divalent cation, which is coordinated by water molecules and two oxygen atoms from DNA and dNTP, is essential for catalyzing the DNA synthesis. Error-free DNA polymerase specifically involved in DNA repair. Plays an important role in translesion synthesis (TLS), where the normal high fidelity DNA polymerases cannot proceed and DNA synthesis stalls. Plays an important role in the repair of UV-induced pyrimidine dimers and confers resistance to ultraviolet light. Depending on the context, it inserts the correct base, but may cause base transitions and transversions. Forms a Schiff base with 5'-deoxyribose phosphate at abasic sites, but does not have lyase activity. Targets POLI to replication foci. Exhibits cyclobutane dimer nonmutagenic bypass activity in vitro. This chain is DNA polymerase eta (POLH), found in Arabidopsis thaliana (Mouse-ear cress).